Here is a 217-residue protein sequence, read N- to C-terminus: Somatotropin (217 aa).

Positions 1–27 (MATGSHTATLLLAVALLGLPWPQEAGA) are cleaved as a signal peptide. H46 lines the Zn(2+) pocket. The cysteines at positions 79 and 190 are disulfide-linked. Residue S132 is modified to Phosphoserine. E199 is a Zn(2+) binding site. A disulfide bridge connects residues C207 and C215.

The protein belongs to the somatotropin/prolactin family.

It is found in the secreted. Functionally, plays an important role in growth control. Its major role in stimulating body growth is to stimulate the liver and other tissues to secrete IGF1. It stimulates both the differentiation and proliferation of myoblasts. It also stimulates amino acid uptake and protein synthesis in muscle and other tissues. The protein is Somatotropin (GH1) of Xanthonycticebus pygmaeus (Pygmy slow loris).